Reading from the N-terminus, the 501-residue chain is Glucose-6-phosphate isomerase (501 aa).

Positions 78–101 (GIANPTENRAAEHSAERGDGAPES) are disordered. Residues 86–97 (RAAEHSAERGDG) show a composition bias toward basic and acidic residues. The active-site Proton donor is E333. Residues H364 and K474 contribute to the active site.

The protein belongs to the GPI family.

The protein localises to the cytoplasm. It catalyses the reaction alpha-D-glucose 6-phosphate = beta-D-fructose 6-phosphate. It functions in the pathway carbohydrate biosynthesis; gluconeogenesis. Its pathway is carbohydrate degradation; glycolysis; D-glyceraldehyde 3-phosphate and glycerone phosphate from D-glucose: step 2/4. Its function is as follows. Catalyzes the reversible isomerization of glucose-6-phosphate to fructose-6-phosphate. The chain is Glucose-6-phosphate isomerase from Sphingopyxis alaskensis (strain DSM 13593 / LMG 18877 / RB2256) (Sphingomonas alaskensis).